Here is an 832-residue protein sequence, read N- to C-terminus: Sodium/hydrogen exchanger 3 (832 aa).

A signal peptide spans 1 to 29 (MGRNRSGCVARCVSLTALVLLLCCPVVRS). Over 30–66 (SEAETDPDSHTEHGDSHGGSREGNDTGFQIVTFRWEH) the chain is Extracellular. Positions 31 to 51 (EAETDPDSHTEHGDSHGGSRE) are disordered. Over residues 36–51 (PDSHTEHGDSHGGSRE) the composition is skewed to basic and acidic residues. Residues 67 to 89 (VQTPYVIALWILVASLGKIVFHL) form a helical membrane-spanning segment. Residues 90-97 (SEKVTSVV) lie on the Cytoplasmic side of the membrane. Residues 98 to 117 (PESALLIVLGLILGGIVWAA) form a helical membrane-spanning segment. The Extracellular portion of the chain corresponds to 118 to 126 (DHSASFTLT). A helical membrane pass occupies residues 127–144 (PTVFFFYLLPPIVLDAGY). Residues 145 to 147 (FMP) are Cytoplasmic-facing. The helical transmembrane segment at 148–183 (NRHFFGNLGTILTYAVIGTVWNAATTGLSLYGVFLL) threads the bilayer. Residues Gly153, Gly156, and Thr157 each coordinate a 1,2-diacyl-sn-glycero-3-phospho-(1D-myo-inositol). Topologically, residues 184-196 (GLMGDLKAGLLEF) are extracellular. The chain crosses the membrane as a helical span at residues 197–218 (LLFGSLIAAVDPVAVLAVFEEV). Over 219–220 (HV) the chain is Cytoplasmic. Residues 221–252 (NEVLFIIVFGESLLNDAVTVVLYNVFNSFVEV) traverse the membrane as a helical segment. Residues 253 to 259 (GAGNVQG) lie on the Extracellular side of the membrane. The chain crosses the membrane as a helical span at residues 260-294 (LDYFKGIVSFFVVSLGGTAVGIIFAFILSLVTRFT). The Cytoplasmic segment spans residues 295–296 (KH). Residues 297–319 (VRVIEPGFVFVISYLSYLTADML) traverse the membrane as a helical segment. The Extracellular portion of the chain corresponds to 320–321 (SL). A helical membrane pass occupies residues 322–338 (SAILAITFCGICCQKYV). At 339–345 (KANLCEQ) the chain is on the cytoplasmic side. A helical membrane pass occupies residues 346–374 (SITTVRYAMKMLASGAETIIFMFLGISAV). At 375-382 (NPTIWTWN) the chain is on the extracellular side. The helical transmembrane segment at 383–404 (TAFILLTLVFISVYRVIGVVIQ) threads the bilayer. Topologically, residues 405-417 (TWILNHYRVVQLE) are cytoplasmic. A helical membrane pass occupies residues 418–441 (IIDQVVMSYGGLRGAVAFALVVLL). At 442–448 (DSNYVGE) the chain is on the extracellular side. Residues 449-482 (RRLFVSTTIIVVYFTVIFQGLTIKPLVKWLKVKR) form a helical membrane-spanning segment. The Cytoplasmic portion of the chain corresponds to 483 to 832 (SQHKEPLLNE…PLSFLPESSM (350 aa)). Gln512, Ile513, and His515 together coordinate a 1,2-diacyl-sn-glycero-3-phospho-(1D-myo-inositol). The segment at 740–760 (TPASNDADETGTGIDNPSFSN) is disordered.

Belongs to the monovalent cation:proton antiporter 1 (CPA1) transporter (TC 2.A.36) family. As to quaternary structure, homodimer. Detected in early distal renal tubules in the kidney bundle zone, in proximal and late distal tubules in the kidney sinus zone, in absorptive epithelial cells of the intestine and in rectal epithelium (at protein level). Isoform 1 is expressed strongly in the gills, at intermediate levels in the kidney, spleen, rectum, spiral intestine and skin, and weakly in the brain, blood and rectal gland. Isoform 2 is expressed strongly in the kidney, rectum and spiral intestine, and weakly in muscles and the rectal gland.

It localises to the apical cell membrane. The protein localises to the cell membrane. It is found in the recycling endosome membrane. Its subcellular location is the early endosome membrane. It carries out the reaction Na(+)(in) + H(+)(out) = Na(+)(out) + H(+)(in). Its activity is regulated as follows. Seems to switch between active and inactive modes in response to various stimuli. Activated directly or indirectly by membrane phosphatidylinositol (PIs). Regulated by a variety of auxiliary proteins, which facilitate the maturation, cell surface expression and function of the transporter. Inhibited specifically by the drug tenapanor. Plasma membrane Na(+)/H(+) antiporter. Exchanges intracellular H(+) ions for extracellular Na(+) in 1:1 stoichiometry, playing a key role in salt and fluid absorption and pH homeostasis. Major apical Na(+)/H(+) exchanger in kidney and intestine playing an important role in renal and intestine Na(+) absorption and blood pressure regulation. The polypeptide is Sodium/hydrogen exchanger 3 (Triakis scyllium (Banded houndshark)).